We begin with the raw amino-acid sequence, 122 residues long: UPF0102 protein Dred_2035 (122 aa).

This sequence belongs to the UPF0102 family.

The chain is UPF0102 protein Dred_2035 from Desulforamulus reducens (strain ATCC BAA-1160 / DSM 100696 / MI-1) (Desulfotomaculum reducens).